Consider the following 388-residue polypeptide: MGNISSSGGEGRRRRRRNHTAAPPPPPPPPSSSLPPPPLPTEIQANPIVFAAVTPYPNPNPNPVYQYPASYYHHPPPGAMPLPPYDHHLQHHPPHPYHNHSWAPVAMARYPYAGHMMAQPTPYVEHQKAVTIRNDVNLKKESLRLEPDPDNPGRFLVSFTFDATVSGRISVIFFAKESEDCKLTATKEDILPPITLDFEKGLGQKFKQSSGSGIDFSVFEDVELFKAAADTEIYPLAVKAEAAPSGGENEEEERSGSKNAQITQAVYEKDKGEIKIRVVKQILWVNGTRYELQEIYGIGNTVEGDDDSADDANDPGKECVICLSEPRDTTVLPCRHMCMCSGCAKVLRFQTNRCPICRQPVERLLEIKVHGNNGSGNNTGQGETVEQE.

Positions 1-43 (MGNISSSGGEGRRRRRRNHTAAPPPPPPPPSSSLPPPPLPTEI) are disordered. Residue Gly-2 is the site of N-myristoyl glycine attachment. Over residues 22–40 (APPPPPPPPSSSLPPPPLP) the composition is skewed to pro residues. Residues 159-281 (FTFDATVSGR…GEIKIRVVKQ (123 aa)) form a DAR2 domain region. The RING-type; atypical zinc-finger motif lies at 319 to 358 (CVICLSEPRDTTVLPCRHMCMCSGCAKVLRFQTNRCPICR). The tract at residues 368–388 (KVHGNNGSGNNTGQGETVEQE) is disordered.

Belongs to the RING-type zinc finger family. LOG2 subfamily. As to quaternary structure, interacts with GDU1. In terms of processing, myristoylated (in vitro). Expressed in the vascular tissues in both phloem and xylem parenchyma cells.

The protein localises to the cell membrane. The enzyme catalyses S-ubiquitinyl-[E2 ubiquitin-conjugating enzyme]-L-cysteine + [acceptor protein]-L-lysine = [E2 ubiquitin-conjugating enzyme]-L-cysteine + N(6)-ubiquitinyl-[acceptor protein]-L-lysine.. The protein operates within protein modification; protein ubiquitination. Functionally, acts as an E3 ubiquitin-protein ligase, or as part of E3 complex, which accepts ubiquitin from specific E2 ubiquitin-conjugating enzymes and then transfers it to substrates (in vitro). Required for GLUTAMINE DUMPER 1(GDU1)-induced amino acid secretion and for amino acid homeostasis. Ubiquitinates GDU1 (in vitro). The chain is Probable E3 ubiquitin-protein ligase LOG2 (LOG2) from Arabidopsis thaliana (Mouse-ear cress).